Consider the following 476-residue polypeptide: Carbamoyl phosphate synthase arginine-specific small chain (476 aa).

The N-terminal 24 residues, 1-24 (MFSHLLKPAARSAGLLGHVNRRYL), are a transit peptide targeting the mitochondrion. Residues 228–415 (HVALIDCGVK…IQNVQRYKDH (188 aa)) enclose the Glutamine amidotransferase type-1 domain. C304 acts as the Nucleophile in catalysis. Residues H388 and E390 contribute to the active site.

This sequence belongs to the CarA family. In terms of assembly, heterodimer composed of 2 chains; the small (or glutamine) chain promotes the hydrolysis of glutamine to ammonia, which is used by the large (or ammonia) chain to synthesize carbamoyl phosphate.

The protein localises to the mitochondrion matrix. It carries out the reaction hydrogencarbonate + L-glutamine + 2 ATP + H2O = carbamoyl phosphate + L-glutamate + 2 ADP + phosphate + 2 H(+). It catalyses the reaction L-glutamine + H2O = L-glutamate + NH4(+). It participates in amino-acid biosynthesis; L-arginine biosynthesis; carbamoyl phosphate from bicarbonate: step 1/1. In terms of biological role, small subunit of the arginine-specific carbamoyl phosphate synthase (CPSase). CPSase catalyzes the formation of carbamoyl phosphate from the ammonia moiety of glutamine, carbonate, and phosphate donated by ATP, the first step of the arginine biosynthetic pathway. The small subunit (glutamine amidotransferase) binds and cleaves glutamine to supply the large subunit with the substrate ammonia. The sequence is that of Carbamoyl phosphate synthase arginine-specific small chain (CPA1) from Phaeosphaeria nodorum (strain SN15 / ATCC MYA-4574 / FGSC 10173) (Glume blotch fungus).